The sequence spans 266 residues: Tryptophan synthase alpha chain (266 aa).

Active-site proton acceptor residues include E49 and D60.

Belongs to the TrpA family. In terms of assembly, tetramer of two alpha and two beta chains.

The catalysed reaction is (1S,2R)-1-C-(indol-3-yl)glycerol 3-phosphate + L-serine = D-glyceraldehyde 3-phosphate + L-tryptophan + H2O. It functions in the pathway amino-acid biosynthesis; L-tryptophan biosynthesis; L-tryptophan from chorismate: step 5/5. In terms of biological role, the alpha subunit is responsible for the aldol cleavage of indoleglycerol phosphate to indole and glyceraldehyde 3-phosphate. This chain is Tryptophan synthase alpha chain, found in Synechococcus elongatus (strain ATCC 33912 / PCC 7942 / FACHB-805) (Anacystis nidulans R2).